Consider the following 119-residue polypeptide: Acidic phospholipase A2 E (119 aa).

7 cysteine pairs are disulfide-bonded: Cys11-Cys71, Cys26-Cys118, Cys28-Cys44, Cys43-Cys99, Cys50-Cys92, Cys60-Cys85, and Cys78-Cys90. Ca(2+) contacts are provided by Tyr27, Gly29, and Gly31. Residue His47 is part of the active site. Residue Asp48 coordinates Ca(2+). Residue Asp93 is part of the active site.

The protein belongs to the phospholipase A2 family. Group I subfamily. D49 sub-subfamily. It depends on Ca(2+) as a cofactor. In terms of tissue distribution, expressed by the venom gland.

It is found in the secreted. The catalysed reaction is a 1,2-diacyl-sn-glycero-3-phosphocholine + H2O = a 1-acyl-sn-glycero-3-phosphocholine + a fatty acid + H(+). In terms of biological role, PLA2 catalyzes the calcium-dependent hydrolysis of the 2-acyl groups in 3-sn-phosphoglycerides. In Naja oxiana (Central Asian cobra), this protein is Acidic phospholipase A2 E.